The chain runs to 491 residues: Cytochrome P450 2K3 (491 aa).

A heme-binding site is contributed by C434.

It belongs to the cytochrome P450 family. The cofactor is heme.

The protein resides in the endoplasmic reticulum membrane. The protein localises to the microsome membrane. It catalyses the reaction an organic molecule + reduced [NADPH--hemoprotein reductase] + O2 = an alcohol + oxidized [NADPH--hemoprotein reductase] + H2O + H(+). In Oncorhynchus mykiss (Rainbow trout), this protein is Cytochrome P450 2K3 (cyp2k3).